The chain runs to 369 residues: Endoglucanase (369 aa).

A signal peptide spans 1 to 22; the sequence is MMTMLRGWITMIVMLTAINAQA. The active-site Proton donor is E56. The active-site Nucleophile is D117.

This sequence belongs to the glycosyl hydrolase 8 (cellulase D) family.

It localises to the secreted. The catalysed reaction is Endohydrolysis of (1-&gt;4)-beta-D-glucosidic linkages in cellulose, lichenin and cereal beta-D-glucans.. It functions in the pathway glycan metabolism; bacterial cellulose biosynthesis. Functionally, hydrolyzes carboxymethylcellulose. The chain is Endoglucanase (bcsZ) from Salmonella typhi.